The sequence spans 302 residues: Polyadenylate-binding protein 2 (302 aa).

A compositionally biased stretch (low complexity) spans 1–12 (MAAAAAAAAAAG). Residues 1–111 (MAAAAAAAAA…EADPGDGAIE (111 aa)) form a disordered region. Alanine 2 carries the N-acetylalanine modification. The segment at 2–141 (AAAAAAAAAA…LKELQNEVEK (140 aa)) is interaction with SKIP. Position 17 is an omega-N-methylarginine (arginine 17). Serine 19 is modified (phosphoserine). A compositionally biased stretch (gly residues) spans 30-47 (GAGGEAGEGDPGGAGDYG). Acidic residues predominate over residues 51-68 (ESEELEPGELLPEPEPEE). Position 52 is a phosphoserine (serine 52). Residues 73–83 (PRAPPGAPGPG) show a composition bias toward pro residues. Position 91 is a phosphoserine (serine 91). A coiled-coil region spans residues 111 to 147 (EDPELEAIKARVREMEEEAEKLKELQNEVEKQMNMSP). The interval 115–143 (LEAIKARVREMEEEAEKLKELQNEVEKQM) is stimulates PAPOLA. Serine 146 and serine 231 each carry phosphoserine. The region spanning 168 to 245 (RSIYVGNVDY…RQIKVIPKRT (78 aa)) is the RRM domain. Asymmetric dimethylarginine; alternate occurs at positions 234, 255, and 259. Residues arginine 234, arginine 255, and arginine 259 each carry the omega-N-methylarginine; alternate modification. Positions 255–302 (RGFPRSRYRARTTNYNSSRSRFYSGFNSRPRGRIYRGRARATSWYSPY) are strong poly(A) affinity and self-association. Asymmetric dimethylarginine is present on residues arginine 261, arginine 263, arginine 265, arginine 273, arginine 275, arginine 283, arginine 285, arginine 287, arginine 290, arginine 292, and arginine 294. The tract at residues 282–302 (SRPRGRIYRGRARATSWYSPY) is interaction with PAPOLA.

In terms of assembly, monomer and homooligomer. Identified in a IGF2BP1-dependent mRNP granule complex containing untranslated mRNAs. Binds RNA as a monomer and oligomerizes when bound to poly(A). Interacts with PAPOLA, but only in presence of oligo(A) RNA. Interacts with NUDT21/CPSF5 and transportin. Associates in a ternary complex with CPSF4 and NS/NS1 and interaction with NS/NS1, blocks nuclear export of host cell mRNAs. Associates in a single complex with SKIP and MYOD1 and interacts with SKIP in differentiated myocytes. May interact with SETX. Interacts (via RRM domain and C-terminal arginine-rich region) with ZFP36 (via hypophosphorylated form); this interaction occurs in the nucleus in a RNA-independent manner, decreases in presence of single-stranded poly(A) RNA-oligomer and in a p38-dependent-manner and may down-regulated RNA poly(A) polymerase activity. Component of the poly(A) tail exosome targeting (PAXT) complex composed of PABPN1, ZFC3H1 and MTREX. Interacts with ZFC3H1 in a RNase-insensitive manner. Interacts with FRG1. Interacts with ZC3H11A. Arginine dimethylation is asymmetric and involves PRMT1 and PRMT3. It does not influence the RNA binding properties. In terms of tissue distribution, ubiquitous.

The protein localises to the cytoplasm. The protein resides in the nucleus. It localises to the nucleus speckle. Involved in the 3'-end formation of mRNA precursors (pre-mRNA) by the addition of a poly(A) tail of 200-250 nt to the upstream cleavage product. Stimulates poly(A) polymerase (PAPOLA) conferring processivity on the poly(A) tail elongation reaction and also controls the poly(A) tail length. Increases the affinity of poly(A) polymerase for RNA. Is also present at various stages of mRNA metabolism including nucleocytoplasmic trafficking and nonsense-mediated decay (NMD) of mRNA. Cooperates with SKIP to synergistically activate E-box-mediated transcription through MYOD1 and may regulate the expression of muscle-specific genes. Binds to poly(A) and to poly(G) with high affinity. May protect the poly(A) tail from degradation. Subunit of the trimeric poly(A) tail exosome targeting (PAXT) complex, a complex that directs a subset of long and polyadenylated poly(A) RNAs for exosomal degradation. The RNA exosome is fundamental for the degradation of RNA in eukaryotic nuclei. Substrate targeting is facilitated by its cofactor MTREX, which links to RNA-binding protein adapters. The polypeptide is Polyadenylate-binding protein 2 (Pabpn1) (Mus musculus (Mouse)).